Reading from the N-terminus, the 405-residue chain is 4-hydroxy-3-methylbut-2-en-1-yl diphosphate synthase (flavodoxin) (405 aa).

Positions 297, 300, 343, and 350 each coordinate [4Fe-4S] cluster.

It belongs to the IspG family. [4Fe-4S] cluster is required as a cofactor.

It carries out the reaction (2E)-4-hydroxy-3-methylbut-2-enyl diphosphate + oxidized [flavodoxin] + H2O + 2 H(+) = 2-C-methyl-D-erythritol 2,4-cyclic diphosphate + reduced [flavodoxin]. The protein operates within isoprenoid biosynthesis; isopentenyl diphosphate biosynthesis via DXP pathway; isopentenyl diphosphate from 1-deoxy-D-xylulose 5-phosphate: step 5/6. Functionally, converts 2C-methyl-D-erythritol 2,4-cyclodiphosphate (ME-2,4cPP) into 1-hydroxy-2-methyl-2-(E)-butenyl 4-diphosphate. The protein is 4-hydroxy-3-methylbut-2-en-1-yl diphosphate synthase (flavodoxin) of Francisella tularensis subsp. tularensis (strain FSC 198).